The primary structure comprises 173 residues: 6,7-dimethyl-8-ribityllumazine synthase (173 aa).

5-amino-6-(D-ribitylamino)uracil contacts are provided by residues Phe24, 58–60 (ALE), and 82–84 (AVI). Residue 87–88 (ET) participates in (2S)-2-hydroxy-3-oxobutyl phosphate binding. His90 acts as the Proton donor in catalysis. Asn115 contributes to the 5-amino-6-(D-ribitylamino)uracil binding site. Residue Arg129 coordinates (2S)-2-hydroxy-3-oxobutyl phosphate. Residues 150 to 173 (ALEPEEDDEDDEDEDFDDEEDDGR) form a disordered region. Residues 152 to 173 (EPEEDDEDDEDEDFDDEEDDGR) are compositionally biased toward acidic residues.

It belongs to the DMRL synthase family.

It carries out the reaction (2S)-2-hydroxy-3-oxobutyl phosphate + 5-amino-6-(D-ribitylamino)uracil = 6,7-dimethyl-8-(1-D-ribityl)lumazine + phosphate + 2 H2O + H(+). Its pathway is cofactor biosynthesis; riboflavin biosynthesis; riboflavin from 2-hydroxy-3-oxobutyl phosphate and 5-amino-6-(D-ribitylamino)uracil: step 1/2. Functionally, catalyzes the formation of 6,7-dimethyl-8-ribityllumazine by condensation of 5-amino-6-(D-ribitylamino)uracil with 3,4-dihydroxy-2-butanone 4-phosphate. This is the penultimate step in the biosynthesis of riboflavin. This Bordetella pertussis (strain Tohama I / ATCC BAA-589 / NCTC 13251) protein is 6,7-dimethyl-8-ribityllumazine synthase.